The following is a 603-amino-acid chain: Threonine--tRNA ligase (603 aa).

The interval 209–500 (DHRKLGNEMK…LIEHCAGELP (292 aa)) is catalytic. Zn(2+) is bound by residues cysteine 301, histidine 352, and histidine 477.

This sequence belongs to the class-II aminoacyl-tRNA synthetase family. As to quaternary structure, homodimer. It depends on Zn(2+) as a cofactor.

It is found in the cytoplasm. The catalysed reaction is tRNA(Thr) + L-threonine + ATP = L-threonyl-tRNA(Thr) + AMP + diphosphate + H(+). Catalyzes the attachment of threonine to tRNA(Thr) in a two-step reaction: L-threonine is first activated by ATP to form Thr-AMP and then transferred to the acceptor end of tRNA(Thr). Also edits incorrectly charged L-seryl-tRNA(Thr). In Campylobacter lari (strain RM2100 / D67 / ATCC BAA-1060), this protein is Threonine--tRNA ligase.